Consider the following 352-residue polypeptide: Mitochondrial hydrolase YKR070W (352 aa).

The protein belongs to the HAD-like hydrolase superfamily.

The protein localises to the mitochondrion. In Saccharomyces cerevisiae (strain ATCC 204508 / S288c) (Baker's yeast), this protein is Mitochondrial hydrolase YKR070W.